The sequence spans 738 residues: Glucan 1,4-alpha-glucosidase SusB (738 aa).

Positions 1-21 (MKKRKILSLIAFLCISFIANA) are cleaved as a signal peptide. E194 is a binding site for Ca(2+). Residues 215–217 (PNS), 437–439 (HHE), and 507–508 (HE) each bind substrate. Residues E508, E526, and E532 each contribute to the Ca(2+) site. The active-site Proton donor/acceptor is E532.

This sequence belongs to the glycosyl hydrolase 97 family. In terms of assembly, monomer. Ca(2+) serves as cofactor.

It localises to the periplasm. It catalyses the reaction Hydrolysis of terminal (1-&gt;4)-linked alpha-D-glucose residues successively from non-reducing ends of the chains with release of beta-D-glucose.. Its pathway is glycan degradation; starch degradation. Glucoamylase that hydrolyzes alpha-1,4-glucosidic linkages, alpha-1,6-, alpha-1,3- and alpha-1,2-glucosidic linkages during starch degradation. The protein is Glucan 1,4-alpha-glucosidase SusB (susB) of Bacteroides thetaiotaomicron (strain ATCC 29148 / DSM 2079 / JCM 5827 / CCUG 10774 / NCTC 10582 / VPI-5482 / E50).